The primary structure comprises 237 residues: Platelet-aggregating proteinase PA-BJ (237 aa).

A propeptide spanning residues N1–I5 is cleaved from the precursor. The 224-residue stretch at V6–A229 folds into the Peptidase S1 domain. Intrachain disulfides connect C12–C144, C31–C47, C79–C236, C123–C191, C155–C170, and C181–C205. N-linked (GlcNAc...) asparagine glycosylation is present at N25. An O-linked (GalNAc...) serine glycan is attached at S28. Catalysis depends on charge relay system residues H46 and D91. The active-site Charge relay system is S185.

The protein belongs to the peptidase S1 family. Snake venom subfamily. Monomer. As to expression, expressed by the venom gland.

The protein resides in the secreted. Inhibited by PMSF. The amidolytic activity is also inhibited by benzamidine derivatives. In terms of biological role, snake venom serine protease that induces platelet aggregation through activation of protease-activated platelet receptors (PAR1/F2R and PAR4/F2RL3). On F2R, the cleavage occurs at Arg41-Ser42 (like thrombin cleavage), and Arg46-Asn47. In normal condition of hemostasis, the cleavage of the Arg41-Ser42 bond liberates a new N-terminus that functions as an agonist. However after envenomation, the cleavage of Arg46-Asn47 bond degrades this potential agonist. This may explain why the snake protease is less potent than thrombin in causing platelet aggregation and release reaction. On F2RL3, a thrombin-like activity has also been proven by calcium release from lung fibroblasts transfected with this receptor. Possesses amidolytic activities. The protein is Platelet-aggregating proteinase PA-BJ of Bothrops jararaca (Jararaca).